The sequence spans 120 residues: SPbeta prophage-derived uncharacterized protein YosG (120 aa).

This is SPbeta prophage-derived uncharacterized protein YosG (yosG) from Bacillus subtilis (strain 168).